The primary structure comprises 474 residues: Synaptotagmin-15B (474 aa).

Disordered regions lie at residues 1–62 (MGVV…AASG) and 75–128 (PRAA…PPAV). Positions 75–88 (PRAAAGHQQHHGPP) are enriched in low complexity. C2 domains are found at residues 200–317 (CLGR…RRVI) and 331–452 (EFGD…EHWD).

Belongs to the synaptotagmin family.

The sequence is that of Synaptotagmin-15B from Homo sapiens (Human).